Consider the following 690-residue polypeptide: Methionine--tRNA ligase (690 aa).

The 'HIGH' region motif lies at 13–23 (PYANGQIHIGH). The Zn(2+) site is built by Cys144, Cys147, Cys157, and Cys160. The 'KMSKS' region signature appears at 335–339 (KMSKS). An ATP-binding site is contributed by Lys338. The tRNA-binding domain maps to 584-690 (DFAKIDLRVA…SGAVPGMRIR (107 aa)).

It belongs to the class-I aminoacyl-tRNA synthetase family. MetG type 1 subfamily. As to quaternary structure, homodimer. Zn(2+) serves as cofactor.

Its subcellular location is the cytoplasm. It catalyses the reaction tRNA(Met) + L-methionine + ATP = L-methionyl-tRNA(Met) + AMP + diphosphate. Is required not only for elongation of protein synthesis but also for the initiation of all mRNA translation through initiator tRNA(fMet) aminoacylation. The chain is Methionine--tRNA ligase from Cupriavidus metallidurans (strain ATCC 43123 / DSM 2839 / NBRC 102507 / CH34) (Ralstonia metallidurans).